The chain runs to 389 residues: Nicotinate phosphoribosyltransferase (389 aa).

Histidine 211 carries the phosphohistidine; by autocatalysis modification.

This sequence belongs to the NAPRTase family. Post-translationally, transiently phosphorylated on a His residue during the reaction cycle. Phosphorylation strongly increases the affinity for substrates and increases the rate of nicotinate D-ribonucleotide production. Dephosphorylation regenerates the low-affinity form of the enzyme, leading to product release.

It carries out the reaction nicotinate + 5-phospho-alpha-D-ribose 1-diphosphate + ATP + H2O = nicotinate beta-D-ribonucleotide + ADP + phosphate + diphosphate. It functions in the pathway cofactor biosynthesis; NAD(+) biosynthesis; nicotinate D-ribonucleotide from nicotinate: step 1/1. Its function is as follows. Catalyzes the synthesis of beta-nicotinate D-ribonucleotide from nicotinate and 5-phospho-D-ribose 1-phosphate at the expense of ATP. The polypeptide is Nicotinate phosphoribosyltransferase (Desulforapulum autotrophicum (strain ATCC 43914 / DSM 3382 / VKM B-1955 / HRM2) (Desulfobacterium autotrophicum)).